Reading from the N-terminus, the 461-residue chain is Phosphomethylpyrimidine synthase (461 aa).

Substrate is bound by residues N81, M110, Y140, H176, 196–198 (SRG), 237–240 (DSLR), and E276. H280 contacts Zn(2+). Y303 provides a ligand contact to substrate. Zn(2+) is bound at residue H344. [4Fe-4S] cluster is bound by residues C424, C427, and C432.

This sequence belongs to the ThiC family. [4Fe-4S] cluster is required as a cofactor.

It carries out the reaction 5-amino-1-(5-phospho-beta-D-ribosyl)imidazole + S-adenosyl-L-methionine = 4-amino-2-methyl-5-(phosphooxymethyl)pyrimidine + CO + 5'-deoxyadenosine + formate + L-methionine + 3 H(+). It participates in cofactor biosynthesis; thiamine diphosphate biosynthesis. Functionally, catalyzes the synthesis of the hydroxymethylpyrimidine phosphate (HMP-P) moiety of thiamine from aminoimidazole ribotide (AIR) in a radical S-adenosyl-L-methionine (SAM)-dependent reaction. The protein is Phosphomethylpyrimidine synthase of Thermosynechococcus vestitus (strain NIES-2133 / IAM M-273 / BP-1).